The chain runs to 360 residues: Probable dual-specificity RNA methyltransferase RlmN (360 aa).

Glu103 functions as the Proton acceptor in the catalytic mechanism. A Radical SAM core domain is found at 109–342 (HEYGNSVCVT…VTIRREQGHD (234 aa)). A disulfide bond links Cys116 and Cys347. Cys123, Cys127, and Cys130 together coordinate [4Fe-4S] cluster. Residues 173–174 (GE), Ser205, 228–230 (SLH), and Asn304 contribute to the S-adenosyl-L-methionine site. Catalysis depends on Cys347, which acts as the S-methylcysteine intermediate.

This sequence belongs to the radical SAM superfamily. RlmN family. Requires [4Fe-4S] cluster as cofactor.

The protein resides in the cytoplasm. It carries out the reaction adenosine(2503) in 23S rRNA + 2 reduced [2Fe-2S]-[ferredoxin] + 2 S-adenosyl-L-methionine = 2-methyladenosine(2503) in 23S rRNA + 5'-deoxyadenosine + L-methionine + 2 oxidized [2Fe-2S]-[ferredoxin] + S-adenosyl-L-homocysteine. The enzyme catalyses adenosine(37) in tRNA + 2 reduced [2Fe-2S]-[ferredoxin] + 2 S-adenosyl-L-methionine = 2-methyladenosine(37) in tRNA + 5'-deoxyadenosine + L-methionine + 2 oxidized [2Fe-2S]-[ferredoxin] + S-adenosyl-L-homocysteine. Functionally, specifically methylates position 2 of adenine 2503 in 23S rRNA and position 2 of adenine 37 in tRNAs. This chain is Probable dual-specificity RNA methyltransferase RlmN, found in Bacillus pumilus (strain SAFR-032).